We begin with the raw amino-acid sequence, 861 residues long: Translation initiation factor IF-2 (861 aa).

2 disordered regions span residues 1-69 and 92-273; these read MSDA…GESA and ARAR…GREK. Residues 53-65 are compositionally biased toward gly residues; that stretch reads GGPGGKQGGGAKG. Over residues 94 to 108 the composition is skewed to basic and acidic residues; the sequence is ARAEAADREAQKKQD. The segment covering 109-120 has biased composition (low complexity); sequence AAAMAQRAASEQ. Basic and acidic residues-rich tracts occupy residues 121–155 and 163–186; these read RQLE…KAEA and DSGR…KRTP. Over residues 213–223 the composition is skewed to low complexity; that stretch reads PGPAAKQQPAR. Positions 255-273 are enriched in basic and acidic residues; it reads RAREREKQRRQDTSGGREK. Residues 357 to 527 form the tr-type G domain; the sequence is PRAPVIAVMG…ALQAELLDLK (171 aa). The interval 366-373 is G1; it reads GHVDHGKT. 366–373 provides a ligand contact to GTP; that stretch reads GHVDHGKT. Positions 391–395 are G2; sequence GITQH. Positions 413–416 are G3; the sequence is DTPG. Residues 413-417 and 467-470 contribute to the GTP site; these read DTPGH and NKCD. The segment at 467–470 is G4; sequence NKCD. Residues 503 to 505 are G5; sequence SAK.

It belongs to the TRAFAC class translation factor GTPase superfamily. Classic translation factor GTPase family. IF-2 subfamily.

The protein resides in the cytoplasm. In terms of biological role, one of the essential components for the initiation of protein synthesis. Protects formylmethionyl-tRNA from spontaneous hydrolysis and promotes its binding to the 30S ribosomal subunits. Also involved in the hydrolysis of GTP during the formation of the 70S ribosomal complex. This chain is Translation initiation factor IF-2, found in Maricaulis maris (strain MCS10) (Caulobacter maris).